We begin with the raw amino-acid sequence, 136 residues long: Large ribosomal subunit protein uL16 (136 aa).

This sequence belongs to the universal ribosomal protein uL16 family. Part of the 50S ribosomal subunit.

In terms of biological role, binds 23S rRNA and is also seen to make contacts with the A and possibly P site tRNAs. This Shigella flexneri protein is Large ribosomal subunit protein uL16.